The sequence spans 202 residues: Large ribosomal subunit protein bL25 (202 aa).

The tract at residues 1 to 21 is disordered; it reads MSKESYELKAEARERVGKGSS.

Belongs to the bacterial ribosomal protein bL25 family. CTC subfamily. As to quaternary structure, part of the 50S ribosomal subunit; part of the 5S rRNA/L5/L18/L25 subcomplex. Contacts the 5S rRNA. Binds to the 5S rRNA independently of L5 and L18.

Its function is as follows. This is one of the proteins that binds to the 5S RNA in the ribosome where it forms part of the central protuberance. The polypeptide is Large ribosomal subunit protein bL25 (Agrobacterium fabrum (strain C58 / ATCC 33970) (Agrobacterium tumefaciens (strain C58))).